The sequence spans 437 residues: Ribosomal protein uS12 methylthiotransferase RimO (437 aa).

The MTTase N-terminal domain maps to 4–114; the sequence is PRVSFVSLGC…VMAAVHEAAP (111 aa). C13, C49, C78, C145, C149, and C152 together coordinate [4Fe-4S] cluster. The Radical SAM core domain maps to 131–369; sequence LTPRHYAYLK…MQRQQKISAT (239 aa). The TRAM domain maps to 372-437; it reads AKKVGKRLPV…DAYDLYGSAV (66 aa).

This sequence belongs to the methylthiotransferase family. RimO subfamily. It depends on [4Fe-4S] cluster as a cofactor.

The protein resides in the cytoplasm. The catalysed reaction is L-aspartate(89)-[ribosomal protein uS12]-hydrogen + (sulfur carrier)-SH + AH2 + 2 S-adenosyl-L-methionine = 3-methylsulfanyl-L-aspartate(89)-[ribosomal protein uS12]-hydrogen + (sulfur carrier)-H + 5'-deoxyadenosine + L-methionine + A + S-adenosyl-L-homocysteine + 2 H(+). Its function is as follows. Catalyzes the methylthiolation of an aspartic acid residue of ribosomal protein uS12. This Mesorhizobium japonicum (strain LMG 29417 / CECT 9101 / MAFF 303099) (Mesorhizobium loti (strain MAFF 303099)) protein is Ribosomal protein uS12 methylthiotransferase RimO.